Reading from the N-terminus, the 265-residue chain is Ribosomal RNA small subunit methyltransferase A (265 aa).

6 residues coordinate S-adenosyl-L-methionine: His17, Leu19, Gly44, Glu65, Asp90, and Asn112.

The protein belongs to the class I-like SAM-binding methyltransferase superfamily. rRNA adenine N(6)-methyltransferase family. RsmA subfamily.

It is found in the cytoplasm. The catalysed reaction is adenosine(1518)/adenosine(1519) in 16S rRNA + 4 S-adenosyl-L-methionine = N(6)-dimethyladenosine(1518)/N(6)-dimethyladenosine(1519) in 16S rRNA + 4 S-adenosyl-L-homocysteine + 4 H(+). Its function is as follows. Specifically dimethylates two adjacent adenosines (A1518 and A1519) in the loop of a conserved hairpin near the 3'-end of 16S rRNA in the 30S particle. May play a critical role in biogenesis of 30S subunits. This is Ribosomal RNA small subunit methyltransferase A from Xylella fastidiosa (strain Temecula1 / ATCC 700964).